The chain runs to 919 residues: Coiled-coil domain-containing protein 66 (919 aa).

Disordered stretches follow at residues 145–166 (KEET…KDEN), 456–505 (ERDR…RERE), 724–744 (ERNN…LPSP), and 762–816 (LKSD…EPSH). The span at 150–161 (QDSLHLNNTSNQ) shows a compositional bias: polar residues. Residues 467-558 (HQKAITAQVE…EQRIRELAQK (92 aa)) adopt a coiled-coil conformation. Residues 570–919 (GGYGLDDVSG…NQEENFNSSF (350 aa)) are mediates localization to cilia, centrosomes and spindle microtubules and the interaction with PCM1, CEP290, CEP104 and CSPP1.

As to quaternary structure, homodimer; disulfide-linked. Interacts with CEP290. Interacts with PCM1. Interacts with ARMC9, TOGARAM1, CSPP1 and CEP104. Interacts with CDK5RAP2, CEP152, CEP192, TBG1 and PRC1. As to expression, expressed in retina and blood. Expressed in retina, mainly in photoreceptors but also in outer plexiform and ganglion cell layers (at protein level).

Its subcellular location is the cytoplasm. It localises to the cytoskeleton. It is found in the microtubule organizing center. The protein resides in the centrosome. The protein localises to the centriolar satellite. Its subcellular location is the cell projection. It localises to the cilium. It is found in the cilium basal body. The protein resides in the cilium axoneme. The protein localises to the photoreceptor inner segment. Its subcellular location is the photoreceptor outer segment. In terms of biological role, microtubule-binding protein required for ciliogenesis. May function in ciliogenesis by mediating the transport of proteins like BBS4 to the cilium, but also through the organization of the centriolar satellites. Required for the assembly of signaling-competent cilia with proper structure and length. Mediates this function in part by regulating transition zone assembly and basal body recruitment of the IFT-B complex. Cooperates with the ciliopathy proteins CSPP1 and CEP104 during cilium length regulation. Plays two important roles during cell division. First, is required for mitotic progression via regulation of spindle assembly, organization and orientation, levels of spindle microtubules (MTs), kinetochore-fiber integrity, and chromosome alignment. Second, functions during cytokinesis in part by regulating assembly and organization of central spindle and midbody MTs. Plays a role in retina morphogenesis and/or homeostasis. The sequence is that of Coiled-coil domain-containing protein 66 (CCDC66) from Canis lupus familiaris (Dog).